Consider the following 174-residue polypeptide: MAAAAELRLLEKSLGLKPGNKYSAQGERQIPVLQTNNGPSLMGLSTIATHLVKQASKEHLLGSTAEEKAMVQQWLEFRVTRVDGHSSKEDTQTLLKDLNSYLEDKVYLAGHNITLADILLYYGLHRFIVDLTVQEKEKYLNVSRWFCHIQHYPDIRQHLSSIVFIKNRLYANSH.

The residue at position 2 (Ala2) is an N-acetylalanine. The tract at residues 2–56 (AAAAELRLLEKSLGLKPGNKYSAQGERQIPVLQTNNGPSLMGLSTIATHLVKQAS) is N-terminal. The region spanning 50–173 (HLVKQASKEH…FIKNRLYANS (124 aa)) is the GST C-terminal domain. A linker region spans residues 57–63 (KEHLLGS). The segment at 64–152 (TAEEKAMVQQ…SRWFCHIQHY (89 aa)) is C-terminal. Lys138 carries the post-translational modification N6-acetyllysine. A coiled-coil region spans residues 153-169 (PDIRQHLSSIVFIKNRL).

As to quaternary structure, part of a multisubunit complex that groups tRNA ligases for Arg (RARS1), Asp (DARS1), Gln (QARS1), Ile (IARS1), Leu (LARS1), Lys (KARS1), Met (MARS1) the bifunctional ligase for Glu and Pro (EPRS1) and the auxiliary subunits AIMP1/p43, AIMP2/p38 and EEF1E1/p18. Can interact simultaneously with MARS1 and EPRS1. Forms a linear complex that contains MARS1, EEF1E1, EPRS1 and AIMP2 that is at the core of the multisubunit complex. Interacts with ATM and ATR. The interaction with ATM, which takes place independently of TP53, is induced by DNA damage that may occur during genotoxic stress or cell growth. The interaction with ATR is enhanced by UV irradiation.

Its subcellular location is the cytoplasm. The protein resides in the nucleus. Functionally, positive modulator of ATM response to DNA damage. The sequence is that of Eukaryotic translation elongation factor 1 epsilon-1 (Eef1e1) from Mus musculus (Mouse).